The sequence spans 110 residues: Circadian clock oscillator protein KaiB (110 aa).

It belongs to the KaiB family. The KaiABC complex composition changes during the circadian cycle to control KaiC phosphorylation. Complexes KaiC(6), KaiA(2-4):KaiC(6), KaiB(6):KaiC(6) and KaiC(6):KaiB(6):KaiA(12) are among the most important forms, many form cooperatively. Undergoes a major conformational rearrangment; in the free state forms homotetramers as a dimer of dimers. When bound to the CI domain of KaiC switches to a monomeric thioredoxin-fold (KaiB(fs)). KaiB(fs) binds CikA, leading it to dephosphorylate phospho-RpaA.

Key component of the KaiABC oscillator complex, which constitutes the main circadian regulator in cyanobacteria. Complex composition changes during the circadian cycle to control KaiC phosphorylation. KaiA stimulates KaiC autophosphorylation, while KaiB sequesters KaiA, leading to KaiC autodephosphorylation. Phospho-Ser-431 KaiC accumulation triggers binding of KaiB to form the KaiB(6):KaiC(6) complex, leading to changes in output regulators CikA and SasA. KaiB switches to a thioredoxin-like fold (KaiB(fs)) when bound to KaiC. KaiB(6):KaiC(6) formation exposes a site for KaiA binding that sequesters KaiA from KaiC, making the KaiC(6):KaiB(6):KaiA(12) complex that results in KaiC autodephosphorylation. In terms of biological role, a metamorphic protein which reversibly switches between an inactive tetrameric fold and a rare, thioredoxin-like monomeric fold (KaiB(fs)). KaiB(fs) binds phospho-KaiC, KaiA and CikA. KaiA and CikA compete for binding to KaiB(fs), and KaiB(fs) and SasA compete for binding to KaiC, thus the clock oscillator and output signal pathway are tightly coupled. This is Circadian clock oscillator protein KaiB from Synechococcus sp. (strain RCC307).